The following is a 391-amino-acid chain: UDP-N-acetylglucosamine--N-acetylmuramyl-(pentapeptide) pyrophosphoryl-undecaprenol N-acetylglucosamine transferase (391 aa).

UDP-N-acetyl-alpha-D-glucosamine is bound by residues Thr-11–Gly-13, Arg-176, Ser-206, and Gln-312.

The protein belongs to the glycosyltransferase 28 family. MurG subfamily.

It localises to the cell inner membrane. The catalysed reaction is di-trans,octa-cis-undecaprenyl diphospho-N-acetyl-alpha-D-muramoyl-L-alanyl-D-glutamyl-meso-2,6-diaminopimeloyl-D-alanyl-D-alanine + UDP-N-acetyl-alpha-D-glucosamine = di-trans,octa-cis-undecaprenyl diphospho-[N-acetyl-alpha-D-glucosaminyl-(1-&gt;4)]-N-acetyl-alpha-D-muramoyl-L-alanyl-D-glutamyl-meso-2,6-diaminopimeloyl-D-alanyl-D-alanine + UDP + H(+). The protein operates within cell wall biogenesis; peptidoglycan biosynthesis. Its function is as follows. Cell wall formation. Catalyzes the transfer of a GlcNAc subunit on undecaprenyl-pyrophosphoryl-MurNAc-pentapeptide (lipid intermediate I) to form undecaprenyl-pyrophosphoryl-MurNAc-(pentapeptide)GlcNAc (lipid intermediate II). This is UDP-N-acetylglucosamine--N-acetylmuramyl-(pentapeptide) pyrophosphoryl-undecaprenol N-acetylglucosamine transferase from Treponema denticola (strain ATCC 35405 / DSM 14222 / CIP 103919 / JCM 8153 / KCTC 15104).